The chain runs to 433 residues: Acetyl-CoA-benzylalcohol acetyltransferase (433 aa).

Residues His152 and Asp377 each act as proton acceptor in the active site.

Belongs to the plant acyltransferase family. The N-terminus is blocked. Expressed in petals, style, sepals and stamens. Very low expression in stigma and not detected in leaves.

It catalyses the reaction benzyl alcohol + acetyl-CoA = benzyl acetate + CoA. The catalysed reaction is (E)-cinnamyl alcohol + acetyl-CoA = (E)-cinnamyl acetate + CoA. Involved in the biosynthesis of benzyl acetate, a major constituent of the floral scent. Can use benzylalcohol, cinnamylalcohol, 3-cis-hexene-1-ol or heptanol as substrates. Has some activity with 2-phenylethanol and 2-naphtalene-ethanol, but no activity with linalool, 2-hydroxybenzylalcohol, 3-hydroxybenzylalcohol or 4-hydroxybenzylalcohol. The chain is Acetyl-CoA-benzylalcohol acetyltransferase (BEAT) from Clarkia breweri (Fairy fans).